The sequence spans 270 residues: DNA-directed RNA polymerase subunit Rpo3 (270 aa).

3 residues coordinate [3Fe-4S] cluster: Cys-206, Cys-209, and Cys-212.

The protein belongs to the archaeal Rpo3/eukaryotic RPB3 RNA polymerase subunit family. In terms of assembly, part of the RNA polymerase complex. Requires [3Fe-4S] cluster as cofactor.

Its subcellular location is the cytoplasm. It carries out the reaction RNA(n) + a ribonucleoside 5'-triphosphate = RNA(n+1) + diphosphate. Functionally, DNA-dependent RNA polymerase (RNAP) catalyzes the transcription of DNA into RNA using the four ribonucleoside triphosphates as substrates. This Methanosphaera stadtmanae (strain ATCC 43021 / DSM 3091 / JCM 11832 / MCB-3) protein is DNA-directed RNA polymerase subunit Rpo3.